Consider the following 254-residue polypeptide: Thiazole synthase (254 aa).

The active-site Schiff-base intermediate with DXP is the Lys-95. Residues Gly-156, 182–183 (AG), and 204–205 (NT) contribute to the 1-deoxy-D-xylulose 5-phosphate site.

It belongs to the ThiG family. As to quaternary structure, homotetramer. Forms heterodimers with either ThiH or ThiS.

The protein resides in the cytoplasm. It catalyses the reaction [ThiS sulfur-carrier protein]-C-terminal-Gly-aminoethanethioate + 2-iminoacetate + 1-deoxy-D-xylulose 5-phosphate = [ThiS sulfur-carrier protein]-C-terminal Gly-Gly + 2-[(2R,5Z)-2-carboxy-4-methylthiazol-5(2H)-ylidene]ethyl phosphate + 2 H2O + H(+). It functions in the pathway cofactor biosynthesis; thiamine diphosphate biosynthesis. Catalyzes the rearrangement of 1-deoxy-D-xylulose 5-phosphate (DXP) to produce the thiazole phosphate moiety of thiamine. Sulfur is provided by the thiocarboxylate moiety of the carrier protein ThiS. In vitro, sulfur can be provided by H(2)S. This Shewanella piezotolerans (strain WP3 / JCM 13877) protein is Thiazole synthase.